Reading from the N-terminus, the 360-residue chain is Peptide chain release factor 1 (360 aa).

Gln237 carries the post-translational modification N5-methylglutamine.

Belongs to the prokaryotic/mitochondrial release factor family. Post-translationally, methylated by PrmC. Methylation increases the termination efficiency of RF1.

The protein resides in the cytoplasm. Its function is as follows. Peptide chain release factor 1 directs the termination of translation in response to the peptide chain termination codons UAG and UAA. In Nitrosococcus oceani (strain ATCC 19707 / BCRC 17464 / JCM 30415 / NCIMB 11848 / C-107), this protein is Peptide chain release factor 1.